The following is a 131-amino-acid chain: Ribonuclease P protein component (131 aa).

This sequence belongs to the RnpA family. In terms of assembly, consists of a catalytic RNA component (M1 or rnpB) and a protein subunit.

It catalyses the reaction Endonucleolytic cleavage of RNA, removing 5'-extranucleotides from tRNA precursor.. Functionally, RNaseP catalyzes the removal of the 5'-leader sequence from pre-tRNA to produce the mature 5'-terminus. It can also cleave other RNA substrates such as 4.5S RNA. The protein component plays an auxiliary but essential role in vivo by binding to the 5'-leader sequence and broadening the substrate specificity of the ribozyme. The protein is Ribonuclease P protein component of Cyanothece sp. (strain PCC 7425 / ATCC 29141).